Here is a 185-residue protein sequence, read N- to C-terminus: Ribosome-recycling factor (185 aa).

The protein belongs to the RRF family.

It localises to the cytoplasm. Its function is as follows. Responsible for the release of ribosomes from messenger RNA at the termination of protein biosynthesis. May increase the efficiency of translation by recycling ribosomes from one round of translation to another. The polypeptide is Ribosome-recycling factor (Thermosipho melanesiensis (strain DSM 12029 / CIP 104789 / BI429)).